A 522-amino-acid chain; its full sequence is Maturase K (522 aa).

This sequence belongs to the intron maturase 2 family. MatK subfamily.

It is found in the plastid. The protein localises to the chloroplast. Its function is as follows. Usually encoded in the trnK tRNA gene intron. Probably assists in splicing its own and other chloroplast group II introns. This is Maturase K from Pillansia templemannii.